Reading from the N-terminus, the 900-residue chain is Periodic tryptophan protein 2 (900 aa).

5 WD repeats span residues 10–47 (GAPYRGGNAVITKNTQLISPVGNRVSVTDLSKNHSVTL), 50–89 (ETSTNICRLASSPDGTFLLAVDEQNRCLFINLPRRVVLHR), 91–129 (TFKDKVGALKFSPNGKFIAVGIGKLVEIWRSPGFRRAVL), 139–178 (NSDDKVVSLEWSLDSDYLLVGSRDLAARLFCVRKLKGVLN), and 185–229 (GHRD…VKMD). Positions 228-284 (MDESEDGHSEPPSPVTPDRADEVMVENGGGVGTELKKRKEYDGKGLESDEEGDDDDE) are disordered. Residues 261–274 (ELKKRKEYDGKGLE) show a composition bias toward basic and acidic residues. Position 275 is a phosphoserine (Ser275). Residues 275–284 (SDEEGDDDDE) are compositionally biased toward acidic residues. 8 WD repeats span residues 302–341 (QASAKVTACDYHQGLDMVVVGFSNGVFGLYQMPDFICIHL), 344–384 (ISRQ…YILK), 387–426 (GHYFDVNCVTYSPDSQLLATGADDNKVKVWNVMSGTCFIT), 429–468 (EHTNAVTALHFMADNHSLLSASLDGTVRAWDFKRYKNYKT), 472–512 (PTPR…IKDI), 515–554 (GHEAPVHGLMFSPLTQLLASSSWDYTVRLWDVFASKGTVE), 557–596 (RHNHDVLTVAFRPDGKQLASSTLDGQINFWDTIEGVLMYT), and 619–658 (SSGKCFTTLCYSADGGYILAAGTSRYICMYDIADQVLLRR). Residues 684-720 (PIDLIDDDNSDEEGGIDKQSRGNLGYDLPGSRPNRGR) form a disordered region. Positions 687-697 (LIDDDNSDEEG) are enriched in acidic residues. The stretch at 720-759 (RPIIRTKSLSIAPTGRSFAAATTEGVLIFSIDDTFIFDPT) is one WD 14 repeat.

Belongs to the WD repeat PWP2 family. Component of the ribosomal small subunit (SSU) processome. Interacts with TBP1 in the nucleus. In terms of tissue distribution, expressed constitutively and ubiquitously; observed in seeds, seedlings, roots, leaves, stems, flowers and siliques.

The protein localises to the nucleus. The protein resides in the nucleolus. Involved in nucleolar processing of pre-18S ribosomal RNA. Plays a role early in ribosome biogenesis, especially in the maturation of 5.8S rRNA. Required for guard cell functions. The polypeptide is Periodic tryptophan protein 2 (Arabidopsis thaliana (Mouse-ear cress)).